The following is a 278-amino-acid chain: MGQKIHPTGFRLAVTRDWNSRWFASSGDYSRMLHEDLKVRDFLKKRLAHASVGRVVIERPAKNARITLFSARPGVVIGKKGEDIELLKRELQKIMGVPVHVNIEEVRKPEVDAKLIADSIAQQLEKRIMFRRAMKRAMQNAMRLGAQGIKIMSAGRLNGAEIARTEWYREGRVPLHTLRADIDYGVSEAKTTYGIIGIKVWVYKGEMLGRNERPAVVENENEARRGRRAPRNDAGDNRGAKRPARRTGAEQAGAGDKAGTRTRKAGVDDAAAVEKEVS.

The KH type-2 domain occupies Val-39–Arg-107. A disordered region spans residues Val-217–Ser-278. Positions Pro-230 to Gly-239 are enriched in basic and acidic residues.

It belongs to the universal ribosomal protein uS3 family. In terms of assembly, part of the 30S ribosomal subunit. Forms a tight complex with proteins S10 and S14.

Its function is as follows. Binds the lower part of the 30S subunit head. Binds mRNA in the 70S ribosome, positioning it for translation. This Aromatoleum aromaticum (strain DSM 19018 / LMG 30748 / EbN1) (Azoarcus sp. (strain EbN1)) protein is Small ribosomal subunit protein uS3.